A 415-amino-acid polypeptide reads, in one-letter code: 3-isopropylmalate dehydratase large subunit (415 aa).

The [4Fe-4S] cluster site is built by Cys297, Cys355, and Cys358.

The protein belongs to the aconitase/IPM isomerase family. LeuC type 2 subfamily. As to quaternary structure, heterodimer of LeuC and LeuD. Requires [4Fe-4S] cluster as cofactor.

It carries out the reaction (2R,3S)-3-isopropylmalate = (2S)-2-isopropylmalate. Its pathway is amino-acid biosynthesis; L-leucine biosynthesis; L-leucine from 3-methyl-2-oxobutanoate: step 2/4. In terms of biological role, catalyzes the isomerization between 2-isopropylmalate and 3-isopropylmalate, via the formation of 2-isopropylmaleate. The protein is 3-isopropylmalate dehydratase large subunit of Sulfurisphaera tokodaii (strain DSM 16993 / JCM 10545 / NBRC 100140 / 7) (Sulfolobus tokodaii).